The following is a 154-amino-acid chain: Ribosome maturation factor RimP (154 aa).

The protein belongs to the RimP family.

The protein localises to the cytoplasm. Functionally, required for maturation of 30S ribosomal subunits. The polypeptide is Ribosome maturation factor RimP (Carboxydothermus hydrogenoformans (strain ATCC BAA-161 / DSM 6008 / Z-2901)).